We begin with the raw amino-acid sequence, 485 residues long: MSLFDHSVSELHKKLNNKEISVTDLVEESYKRIADVEDNVKAFLTLNEENARAKAKELDAKIGAEDNGLLFGMPIGVKDNIVTKGLRTTCASKMLANFDPIYDATVVQKLNEADTITIGKLNMDEFAMGSSNENSGFYATKNPWNLEYVPGGSSGGSAAAVAAGEVLFSLGSDTGGSIRQPAAYCGVVGLKPTYGRVSRYGLVAFASSLDQIGPITRTVEDNAYLLQAISGVDRMDATSANIEVGNYLAGLTGDVKGLRIAVPKEYLGEGVGEEARESVLAALKVLEGMGATWEEVSLPHSKYALATYYLISSSEASSNLSRFDGVRYGVRSDNVNNLMDLYKNTRSEGFGDEVKRRIMLGTFALSSGYYDAYYKKAQQVRTLIKNDFENVFANYDVIIGPTTPTPAFKVGEKIDDPMTMYANDILTIPVNLAGVPAISVPCGFGANNMPLGLQIIGKHFDEATIYRVAHAFEQATDYHTKKASL.

Catalysis depends on charge relay system residues K78 and S153. Residue S177 is the Acyl-ester intermediate of the active site.

It belongs to the amidase family. GatA subfamily. As to quaternary structure, heterotrimer of A, B and C subunits.

It carries out the reaction L-glutamyl-tRNA(Gln) + L-glutamine + ATP + H2O = L-glutaminyl-tRNA(Gln) + L-glutamate + ADP + phosphate + H(+). In terms of biological role, allows the formation of correctly charged Gln-tRNA(Gln) through the transamidation of misacylated Glu-tRNA(Gln) in organisms which lack glutaminyl-tRNA synthetase. The reaction takes place in the presence of glutamine and ATP through an activated gamma-phospho-Glu-tRNA(Gln). This Bacillus cytotoxicus (strain DSM 22905 / CIP 110041 / 391-98 / NVH 391-98) protein is Glutamyl-tRNA(Gln) amidotransferase subunit A.